The primary structure comprises 1102 residues: ATP-dependent DNA helicase MPH1 (1102 aa).

Residues 19 to 55 (ALDKPATSGLHSREQEQQRDISNATPHTSTDLELEDF) form a disordered region. The span at 38–49 (DISNATPHTSTD) shows a compositional bias: polar residues. Residues 147-315 (IVKNGLFNNT…DVIDNLGVSH (169 aa)) enclose the Helicase ATP-binding domain. 160 to 167 (LPTGLGKT) lines the ATP pocket. Positions 263 to 266 (DEAH) match the DEAH box motif. The region spanning 490 to 651 (NLLNYFMDAG…GSRFNFRHDL (162 aa)) is the Helicase C-terminal domain. 4 disordered regions span residues 672 to 702 (PIEN…FNMP), 720 to 743 (ASKT…DEIS), 818 to 837 (SQGI…KSRY), and 858 to 1102 (SGRK…SESG). Basic residues predominate over residues 687 to 699 (RSTRGKKASKKKF). Positions 822–837 (ETRHTKPHGDTDKSRY) are enriched in basic and acidic residues. The span at 1003 to 1019 (SSGAASKSGSTASTAAK) shows a compositional bias: low complexity. A compositionally biased stretch (acidic residues) spans 1069–1082 (SDDDDDDNDDEDDV).

It belongs to the DEAD box helicase family. DEAH subfamily. FANCM sub-subfamily. As to quaternary structure, interacts with the MHF histone-fold complex to form the FANCM-MHF complex.

It is found in the nucleus. It carries out the reaction ATP + H2O = ADP + phosphate + H(+). ATP-dependent DNA helicase involved in DNA damage repair by homologous recombination and in genome maintenance. Capable of unwinding D-loops. Plays a role in limiting crossover recombinants during mitotic DNA double-strand break (DSB) repair. Component of a FANCM-MHF complex which promotes gene conversion at blocked replication forks, probably by reversal of the stalled fork. This is ATP-dependent DNA helicase MPH1 from Pyricularia oryzae (strain 70-15 / ATCC MYA-4617 / FGSC 8958) (Rice blast fungus).